A 135-amino-acid polypeptide reads, in one-letter code: MLSPKKTKFRKEHRGRMKGRSSRGSRISFGKYALQALEPAWLTSRQIEAGRRAMTRNVRRGGKIWVRIFPDKPVTVKPTQTRMGSGKGSPEYWVAVVKPGRILYEMGGVAENIARKAIEIAASKMPIRTQFIISK.

Positions 1-23 are enriched in basic residues; it reads MLSPKKTKFRKEHRGRMKGRSSR. Residues 1-24 form a disordered region; the sequence is MLSPKKTKFRKEHRGRMKGRSSRG.

Belongs to the universal ribosomal protein uL16 family. As to quaternary structure, part of the 50S ribosomal subunit.

The protein resides in the plastid. The protein localises to the chloroplast. This chain is Large ribosomal subunit protein uL16c, found in Pelargonium hortorum (Common geranium).